A 189-amino-acid polypeptide reads, in one-letter code: Adenylate kinase (189 aa).

10-15 is an ATP binding site; it reads AAGKGT. Residues 30-59 are NMP; the sequence is STGDMLRAARASGSELGQRVAKIMDEGGLV. Residues threonine 31, arginine 36, 57–59, 85–88, and glutamine 92 each bind AMP; these read GLV and GFPR. The segment at 126-136 is LID; it reads KRFEEQGRADD. Residue arginine 127 coordinates ATP. Residues arginine 133 and arginine 144 each contribute to the AMP site. Glycine 172 contributes to the ATP binding site.

This sequence belongs to the adenylate kinase family. In terms of assembly, monomer.

It is found in the cytoplasm. It catalyses the reaction AMP + ATP = 2 ADP. It participates in purine metabolism; AMP biosynthesis via salvage pathway; AMP from ADP: step 1/1. Catalyzes the reversible transfer of the terminal phosphate group between ATP and AMP. Plays an important role in cellular energy homeostasis and in adenine nucleotide metabolism. The chain is Adenylate kinase from Hyphomonas neptunium (strain ATCC 15444).